The chain runs to 121 residues: Holin-like protein CidA (121 aa).

Transmembrane regions (helical) follow at residues 27-47 (VHLP…SLKF), 58-78 (GADF…VAVI), and 89-109 (IDLI…TGIL).

It belongs to the CidA/LrgA family. CidA subfamily.

Its subcellular location is the cell membrane. Increases the activity of extracellular murein hydrolases possibly by mediating their export via hole formation. Inhibited by the antiholin-like proteins LrgAB. In an unstressed cell, the LrgAB products probably inhibit the function of the CidA protein. When a cell is stressed by the addition of antibiotics or by other factors in the environment, CidA possibly oligomerizes within the bacterial cell membrane, creating lesions that disrupt the proton motive force, which in turn results in loss of cell viability. These lesions are also hypothesized to regulate the subsequent cell lysis by either allowing the murein hydrolases access to the cell wall substrate and/or regulating their activity by a possible change in the cell wall pH that results from loss of membrane potential. This Bacillus cytotoxicus (strain DSM 22905 / CIP 110041 / 391-98 / NVH 391-98) protein is Holin-like protein CidA.